We begin with the raw amino-acid sequence, 181 residues long: Ribosome-recycling factor (181 aa).

This sequence belongs to the RRF family.

It is found in the cytoplasm. Responsible for the release of ribosomes from messenger RNA at the termination of protein biosynthesis. May increase the efficiency of translation by recycling ribosomes from one round of translation to another. This is Ribosome-recycling factor from Tropheryma whipplei (strain TW08/27) (Whipple's bacillus).